We begin with the raw amino-acid sequence, 232 residues long: Large ribosomal subunit protein uL1 (232 aa).

It belongs to the universal ribosomal protein uL1 family. Part of the 50S ribosomal subunit.

Functionally, binds directly to 23S rRNA. The L1 stalk is quite mobile in the ribosome, and is involved in E site tRNA release. Its function is as follows. Protein L1 is also a translational repressor protein, it controls the translation of the L11 operon by binding to its mRNA. The sequence is that of Large ribosomal subunit protein uL1 from Methylobacterium radiotolerans (strain ATCC 27329 / DSM 1819 / JCM 2831 / NBRC 15690 / NCIMB 10815 / 0-1).